The chain runs to 248 residues: 2,3-bisphosphoglycerate-dependent phosphoglycerate mutase (248 aa).

Residues 8-15, 21-22, arginine 60, 87-90, lysine 98, 114-115, and 183-184 each bind substrate; these read RHGESEWN, TG, ERHY, RR, and GN. Residue histidine 9 is the Tele-phosphohistidine intermediate of the active site. Catalysis depends on glutamate 87, which acts as the Proton donor/acceptor.

This sequence belongs to the phosphoglycerate mutase family. BPG-dependent PGAM subfamily.

It catalyses the reaction (2R)-2-phosphoglycerate = (2R)-3-phosphoglycerate. It participates in carbohydrate degradation; glycolysis; pyruvate from D-glyceraldehyde 3-phosphate: step 3/5. Functionally, catalyzes the interconversion of 2-phosphoglycerate and 3-phosphoglycerate. The chain is 2,3-bisphosphoglycerate-dependent phosphoglycerate mutase from Borrelia hermsii (strain HS1 / DAH).